The primary structure comprises 241 residues: MSRIQQVNKSILIRSFCTGAPSKSNFSPVGNFLRIGDVVPDFSQDSSVGQINLYKTLGDSWGLFVSHPKDFTPICTTELGRLAKLKPEFEKRNCKILALSVDSVKDHLEWMKDIEETQKVKINYPIIADQDRKVADLYGMIHPNADNTFTVRSVFFISPDKRLRAQITLPASTGRNFNEIIRILDSFQLTDKYKVATPADWVDGDDCIIVPTVFDEDAKKLFPKGFPKIKSYLRVTPQPNK.

The Thioredoxin domain occupies 33 to 189; it reads LRIGDVVPDF…IIRILDSFQL (157 aa). Cysteine 75 (cysteine sulfenic acid (-SOH) intermediate) is an active-site residue.

The protein belongs to the peroxiredoxin family. Prx6 subfamily. In terms of assembly, homodimer.

The enzyme catalyses a hydroperoxide + [thioredoxin]-dithiol = an alcohol + [thioredoxin]-disulfide + H2O. Thiol-specific peroxidase that catalyzes the reduction of hydrogen peroxide and organic hydroperoxides to water and alcohols, respectively. Plays a role in cell protection against oxidative stress by detoxifying peroxides. The sequence is that of 1-Cys peroxiredoxin from Dictyostelium discoideum (Social amoeba).